The chain runs to 1033 residues: Ubiquitin carboxyl-terminal hydrolase 48 (1033 aa).

Residues V89 to Q419 form the USP domain. The active-site Nucleophile is the C98. H351 serves as the catalytic Proton acceptor. DUSP domains lie at Q457–C552, N567–C690, and M710–A823. The interval E610–E639 is disordered. A disordered region spans residues A878–Q920. Residues R931–A1007 enclose the Ubiquitin-like domain.

This sequence belongs to the peptidase C19 family.

The protein localises to the cytoplasm. Its subcellular location is the nucleus. The catalysed reaction is Thiol-dependent hydrolysis of ester, thioester, amide, peptide and isopeptide bonds formed by the C-terminal Gly of ubiquitin (a 76-residue protein attached to proteins as an intracellular targeting signal).. Recognizes and hydrolyzes the peptide bond at the C-terminal Gly of ubiquitin. Involved in the processing of poly-ubiquitin precursors as well as that of ubiquitinated proteins. The sequence is that of Ubiquitin carboxyl-terminal hydrolase 48 (USP48) from Gallus gallus (Chicken).